The following is a 302-amino-acid chain: Putative RING-H2 finger protein ATL35 (302 aa).

A signal peptide spans 1 to 31; the sequence is MTIFARDLIYRIETKVLLPLFLVHLLPYVTC. The helical transmembrane segment at 50 to 70 threads the bilayer; that stretch reads TVIAIIVLAIFISLSMVACFL. The RING-type; atypical zinc-finger motif lies at 123 to 165; that stretch reads CAICLSEFVDKETLRWMPPCSHTFHANCIDVWLSSQSTCPACR. Serine 226 is modified (phosphoserine).

Belongs to the RING-type zinc finger family. ATL subfamily.

The protein localises to the membrane. It catalyses the reaction S-ubiquitinyl-[E2 ubiquitin-conjugating enzyme]-L-cysteine + [acceptor protein]-L-lysine = [E2 ubiquitin-conjugating enzyme]-L-cysteine + N(6)-ubiquitinyl-[acceptor protein]-L-lysine.. Its pathway is protein modification; protein ubiquitination. This chain is Putative RING-H2 finger protein ATL35 (ATL35), found in Arabidopsis thaliana (Mouse-ear cress).